Consider the following 1299-residue polypeptide: DNA-directed RNA polymerase subunit beta' (1299 aa).

Residues Cys-60, Cys-62, Cys-75, and Cys-78 each coordinate Zn(2+). The Mg(2+) site is built by Asp-535, Asp-537, and Asp-539. Residues Cys-877, Cys-954, Cys-961, and Cys-964 each contribute to the Zn(2+) site.

The protein belongs to the RNA polymerase beta' chain family. In terms of assembly, the RNAP catalytic core consists of 2 alpha, 1 beta, 1 beta' and 1 omega subunit. When a sigma factor is associated with the core the holoenzyme is formed, which can initiate transcription. Mg(2+) is required as a cofactor. It depends on Zn(2+) as a cofactor.

The catalysed reaction is RNA(n) + a ribonucleoside 5'-triphosphate = RNA(n+1) + diphosphate. DNA-dependent RNA polymerase catalyzes the transcription of DNA into RNA using the four ribonucleoside triphosphates as substrates. This chain is DNA-directed RNA polymerase subunit beta', found in Pseudarthrobacter chlorophenolicus (strain ATCC 700700 / DSM 12829 / CIP 107037 / JCM 12360 / KCTC 9906 / NCIMB 13794 / A6) (Arthrobacter chlorophenolicus).